Here is a 623-residue protein sequence, read N- to C-terminus: Isocitrate dehydrogenase kinase/phosphatase (623 aa).

ATP-binding positions include 344–350 (APGIKGM) and lysine 365. Aspartate 400 is an active-site residue.

It belongs to the AceK family.

Its subcellular location is the cytoplasm. It carries out the reaction L-seryl-[isocitrate dehydrogenase] + ATP = O-phospho-L-seryl-[isocitrate dehydrogenase] + ADP + H(+). Functionally, bifunctional enzyme which can phosphorylate or dephosphorylate isocitrate dehydrogenase (IDH) on a specific serine residue. This is a regulatory mechanism which enables bacteria to bypass the Krebs cycle via the glyoxylate shunt in response to the source of carbon. When bacteria are grown on glucose, IDH is fully active and unphosphorylated, but when grown on acetate or ethanol, the activity of IDH declines drastically concomitant with its phosphorylation. The sequence is that of Isocitrate dehydrogenase kinase/phosphatase from Polaromonas naphthalenivorans (strain CJ2).